We begin with the raw amino-acid sequence, 98 residues long: Small ribosomal subunit protein bS6 (98 aa).

The protein belongs to the bacterial ribosomal protein bS6 family.

Binds together with bS18 to 16S ribosomal RNA. This chain is Small ribosomal subunit protein bS6, found in Lactobacillus helveticus (strain DPC 4571).